Consider the following 347-residue polypeptide: KIN17-like protein KLP (347 aa).

The Nuclear localization signal (NLS) motif lies at 222–225 (KRKR).

This sequence belongs to the KIN17 family.

The protein localises to the cytoplasm. It is found in the nucleus. Functionally, may act as repressor of root growth during copper excess and of hypocotyl growth in the dark. The chain is KIN17-like protein KLP from Arabidopsis thaliana (Mouse-ear cress).